Consider the following 307-residue polypeptide: Glycerol-3-phosphate dehydrogenase [NAD(P)+] (307 aa).

The NADPH site is built by W14, R34, R35, and K82. Sn-glycerol 3-phosphate-binding residues include K82 and G110. An NADPH-binding site is contributed by S114. Sn-glycerol 3-phosphate contacts are provided by K165, D218, S228, R229, and N230. Catalysis depends on K165, which acts as the Proton acceptor. R229 serves as a coordination point for NADPH. Residue E255 coordinates NADPH.

This sequence belongs to the NAD-dependent glycerol-3-phosphate dehydrogenase family.

Its subcellular location is the cytoplasm. It carries out the reaction sn-glycerol 3-phosphate + NAD(+) = dihydroxyacetone phosphate + NADH + H(+). The enzyme catalyses sn-glycerol 3-phosphate + NADP(+) = dihydroxyacetone phosphate + NADPH + H(+). The protein operates within membrane lipid metabolism; glycerophospholipid metabolism. Its function is as follows. Catalyzes the reduction of the glycolytic intermediate dihydroxyacetone phosphate (DHAP) to sn-glycerol 3-phosphate (G3P), the key precursor for phospholipid synthesis. The sequence is that of Glycerol-3-phosphate dehydrogenase [NAD(P)+] from Trichormus variabilis (strain ATCC 29413 / PCC 7937) (Anabaena variabilis).